The following is a 325-amino-acid chain: Hydroxymethylglutaryl-CoA lyase, mitochondrial (325 aa).

A mitochondrion-targeting transit peptide spans 1-27 (MAAMTKALPRRLVGLASLRAVSTSSMD). Positions 33–300 (VKIVEVGPRD…HTGVNLQKLL (268 aa)) constitute a Pyruvate carboxyltransferase domain. A substrate-binding site is contributed by arginine 41. Aspartate 42 contacts a divalent metal cation. Lysine 48 is subject to N6-acetyllysine; alternate. At lysine 48 the chain carries N6-succinyllysine; alternate. The residue at position 111 (lysine 111) is an N6-acetyllysine. Residues lysine 137 and lysine 179 each carry the N6-acetyllysine; alternate modification. N6-succinyllysine; alternate occurs at positions 137 and 179. Residues histidine 233 and histidine 235 each coordinate a divalent metal cation. Cysteine 266 is a catalytic residue. Position 275 (asparagine 275) interacts with a divalent metal cation. Residues 323 to 325 (CKL) carry the Microbody targeting signal motif. Lysine 324 is subject to N6-acetyllysine.

Belongs to the HMG-CoA lyase family. Homodimer; disulfide-linked. Can also form homotetramers.

The protein localises to the mitochondrion matrix. It is found in the peroxisome. It catalyses the reaction (3S)-3-hydroxy-3-methylglutaryl-CoA = acetoacetate + acetyl-CoA. It participates in metabolic intermediate metabolism; (S)-3-hydroxy-3-methylglutaryl-CoA degradation; acetoacetate from (S)-3-hydroxy-3-methylglutaryl-CoA: step 1/1. In terms of biological role, mitochondrial 3-hydroxy-3-methylglutaryl-CoA lyase that catalyzes a cation-dependent cleavage of (S)-3-hydroxy-3-methylglutaryl-CoA into acetyl-CoA and acetoacetate, a key step in ketogenesis. Terminal step in leucine catabolism. Ketone bodies (beta-hydroxybutyrate, acetoacetate and acetone) are essential as an alternative source of energy to glucose, as lipid precursors and as regulators of metabolism. In Macaca fascicularis (Crab-eating macaque), this protein is Hydroxymethylglutaryl-CoA lyase, mitochondrial (HMGCL).